A 981-amino-acid chain; its full sequence is NAD(+) hydrolase tir-1 (981 aa).

Disordered stretches follow at residues 1–31, 74–128, and 173–225; these read MLPN…RSLK, QNEQ…PTQP, and LSTP…PVDQ. 2 stretches are compositionally biased toward polar residues: residues 12–23 and 74–85; these read PSFQSLNNNNQR and QNEQDGETTSTD. Residues 87-97 show a composition bias toward acidic residues; sequence AFFELDDDDDL. Positions 98–114 are enriched in low complexity; it reads SSPSVPGSPVDPPSISV. The segment covering 115–128 has biased composition (pro residues); that stretch reads PLPPKSAPPCPTQP. Over residues 182–200 the composition is skewed to basic and acidic residues; that stretch reads EEMHNGQVRKESEYRRFKS. SAM domains are found at residues 614-678 and 684-750; these read WTCA…LKVA and VDES…AKHP. Residues 760 to 857 form the TIR domain; sequence KQIDVFISYR…EHQKNIIPIF (98 aa). 769-770 serves as a coordination point for NAD(+); the sequence is RR. Glu842 is an active-site residue. Polar residues-rich tracts occupy residues 908 to 939, 954 to 963, and 972 to 981; these read TTPT…TGPS, FTPTGSQERA, and PSASTTSDRN. Residues 908 to 981 are disordered; that stretch reads TTPTTKEMPS…PSASTTSDRN (74 aa).

Belongs to the SARM1 family. In terms of assembly, homodimer. Interacts with rab-1, pal-1 and unc-43. In terms of tissue distribution, highly expressed in hypodermis. Localizes to postsynaptic regions of axons.

The protein localises to the cytoplasm. It catalyses the reaction NAD(+) + H2O = ADP-D-ribose + nicotinamide + H(+). Functionally, NAD(+) hydrolase, which plays a key role in non-apoptotic cell death by regulating NAD(+) metabolism. In response to stress, homooligomerizes and catalyzes cleavage of NAD(+) into ADP-D-ribose (ADPR) and nicotinamide; NAD(+) cleavage promoting non-apoptotic neuronal cell death. In males, involved in non-apoptotic death of the linker cell which guides gonad elongation during larval development. Required for both innate immune response and specification of AWC(OFF) neuron. During late embryogenesis, it acts downstream of CAMKII (unc-43) to regulate specification of asymmetric odorant receptors in AWC(OFF) neuron via the nsy-1/ASK1 pmk-1/p38 MAP kinase signaling cascade. Required to localize nsy-1 to postsynaptic regions of AWC neuron, suggesting that it may act by assembling a signaling complex that regulate odorant receptor expression. Also plays a central role in resistance to infection to a broad range of bacterial and fungi pathogens, possibly by activating pmk-1, independently of the NF-kappa-B pathway. Required for expression of antimicrobial peptides nlp-29 and nlp-31. Its role in immune response and neuron specification may be mediated by the same nsy-1/ASK1 pmk-1/p38 MAP kinase cascade signaling pathway. Involved in the response to anoxic conditions probably by activating the p38 pathway composed of nsy-1/sek-1/pmk-1. Involved in regulation of the serotonergic response of ADF neurons to pathogenic food. In addition, plays a role in the up-regulation of gcs-1 upon arsenite treatment, most likely through activation of pmk-1, to confer protection against toxicity induced by heavy metals. Its function is as follows. Regulates expression of antimicrobial peptide nlp-29 in response to fungal infection or physical injury. This Caenorhabditis elegans protein is NAD(+) hydrolase tir-1.